Reading from the N-terminus, the 470-residue chain is MSSKQVPDTLTFECETGNYHTFCPISCVAWLYQKIEDSFFLVVGTKTCGYFLQNALGVMIFAEPRYAMAELEEGDISAQLNDYEELKRLCVQIKKDRNPSVIVWIGTCTTEIIKMDLEGMAPRLEAEIDIPIVVARANGLDYAFTQGEDTVLAAMANRCPEWIQNAQNNNDQDQAIQGLMSFFPLKNTKLSSEPTLLSNHPPLVLFGSLPSNVASQITLELKRQNIHVSGWLPAQRYSELPSVGEGVYVCGVNPFLSRTATTLMRRRKCKLIGAPFPIGPDGTRAWIEKICSVFGIEPQGLEEREAQVWKGLQDYLDLVRGKSVFFMGDNLLEVSLARFLIRCGMIVYEIGIPYMDKRYQAAELALLQQTCEQMGTPMPRIVEKPDNYNQVQRMRELQPDLAITGMAHANPLEARGISTKWSVEFTFAQIHGFTNARDILELVTRPLRRNLSLEDLGWSALVKRDKINLV.

[4Fe-4S] cluster is bound by residues Cys23, Cys48, and Cys108.

This sequence belongs to the BchN/ChlN family. In terms of assembly, protochlorophyllide reductase is composed of three subunits; ChlL, ChlN and ChlB. Forms a heterotetramer of two ChlB and two ChlN subunits. Requires [4Fe-4S] cluster as cofactor.

Its subcellular location is the plastid. It localises to the chloroplast. It carries out the reaction chlorophyllide a + oxidized 2[4Fe-4S]-[ferredoxin] + 2 ADP + 2 phosphate = protochlorophyllide a + reduced 2[4Fe-4S]-[ferredoxin] + 2 ATP + 2 H2O. Its pathway is porphyrin-containing compound metabolism; chlorophyll biosynthesis (light-independent). In terms of biological role, component of the dark-operative protochlorophyllide reductase (DPOR) that uses Mg-ATP and reduced ferredoxin to reduce ring D of protochlorophyllide (Pchlide) to form chlorophyllide a (Chlide). This reaction is light-independent. The NB-protein (ChlN-ChlB) is the catalytic component of the complex. The polypeptide is Light-independent protochlorophyllide reductase subunit N (Zygnema circumcarinatum (Green alga)).